The following is a 217-amino-acid chain: Ras-related protein RABA2c (217 aa).

GTP-binding positions include 19-27 (GDSGVGKSN), 38-44 (CLESKST), 67-71 (DTAGQ), 125-128 (NKSD), and 155-157 (SAL). The Effector region motif lies at 41 to 49 (SKSTIGVEF). A disordered region spans residues 195–217 (PGQGTTINVDDTSGGAKRACCSS). 2 S-geranylgeranyl cysteine lipidation sites follow: Cys-214 and Cys-215.

This sequence belongs to the small GTPase superfamily. Rab family. As to expression, expressed in root tips.

It is found in the endosome membrane. The protein resides in the golgi apparatus. Its subcellular location is the trans-Golgi network membrane. Functionally, intracellular vesicle trafficking and protein transport. The chain is Ras-related protein RABA2c (RABA2C) from Arabidopsis thaliana (Mouse-ear cress).